A 265-amino-acid polypeptide reads, in one-letter code: Exosome complex component RRP42 (265 aa).

It belongs to the RNase PH family. In terms of assembly, component of the RNA exosome complex. Specifically part of the catalytically inactive RNA exosome core complex (Exo-9) which may associate with the catalytic subunits RRP6 and DIS3 in cytoplasmic- and nuclear-specific RNA exosome complex forms. Exo-9 is formed by a hexameric base ring of RNase PH domain-containing subunits and a cap ring consisting of CSL4, RRP4 and RRP40.

The protein resides in the cytoplasm. Its subcellular location is the nucleus. It is found in the nucleolus. Non-catalytic component of the RNA exosome complex which has 3'-&gt;5' exoribonuclease activity and participates in a multitude of cellular RNA processing and degradation events. In the nucleus, the RNA exosome complex is involved in proper maturation of stable RNA species such as rRNA, snRNA and snoRNA, in the elimination of RNA processing by-products and non-coding 'pervasive' transcripts, such as antisense RNA species and cryptic unstable transcripts (CUTs), and of mRNAs with processing defects, thereby limiting or excluding their export to the cytoplasm. In the cytoplasm, the RNA exosome complex is involved in general mRNA turnover and in RNA surveillance pathways, preventing translation of aberrant mRNAs. The catalytic inactive RNA exosome core complex of 9 subunits (Exo-9) is proposed to play a pivotal role in the binding and presentation of RNA for ribonucleolysis, and to serve as a scaffold for the association with catalytic subunits and accessory proteins or complexes. RRP42 is part of the hexameric ring of RNase PH domain-containing subunits proposed to form a central channel which threads RNA substrates for degradation. The chain is Exosome complex component RRP42 (RRP42) from Saccharomyces cerevisiae (strain ATCC 204508 / S288c) (Baker's yeast).